Here is an 89-residue protein sequence, read N- to C-terminus: Small ribosomal subunit protein uS17 (89 aa).

It belongs to the universal ribosomal protein uS17 family. Part of the 30S ribosomal subunit.

In terms of biological role, one of the primary rRNA binding proteins, it binds specifically to the 5'-end of 16S ribosomal RNA. In Ralstonia nicotianae (strain ATCC BAA-1114 / GMI1000) (Ralstonia solanacearum), this protein is Small ribosomal subunit protein uS17.